A 174-amino-acid chain; its full sequence is Repair DNA polymerase X (174 aa).

The involved in ssDNA binding stretch occupies residues 42–51 (REEKMLNDVD). Mg(2+) contacts are provided by Asp49 and Asp51. Cys81 and Cys86 are joined by a disulfide. Asp100 lines the Mg(2+) pocket.

This sequence belongs to the DNA polymerase type-X family. The cofactor is Mg(2+).

It is found in the virion. It catalyses the reaction DNA(n) + a 2'-deoxyribonucleoside 5'-triphosphate = DNA(n+1) + diphosphate. In terms of biological role, error-prone polymerase lacking a proofreading 3'-5' exonuclease which catalyzes the gap-filling reaction during the DNA repair process. Specifically binds intermediates in the single-nucleotide base-excision repair process. Also catalyzes DNA polymerization with low nucleotide-insertion fidelity. Probably acts as a strategic DNA mutase, which gives rise to a rapid emergence of variants. Generates mismatched G-G pairs, in that case, the polymerase first binds the deoxynucleotide followed by mismatch formation. Together with the viral DNA ligase, fills the single nucleotide gaps generated by the AP endonuclease. Binds DNA with high affinity via the helix alphaE. The sequence is that of Repair DNA polymerase X from African swine fever virus (isolate Tick/Malawi/Lil 20-1/1983) (ASFV).